A 178-amino-acid polypeptide reads, in one-letter code: Large ribosomal subunit protein uL6 (178 aa).

Belongs to the universal ribosomal protein uL6 family. As to quaternary structure, part of the 50S ribosomal subunit.

In terms of biological role, this protein binds to the 23S rRNA, and is important in its secondary structure. It is located near the subunit interface in the base of the L7/L12 stalk, and near the tRNA binding site of the peptidyltransferase center. The sequence is that of Large ribosomal subunit protein uL6 from Kocuria rhizophila (strain ATCC 9341 / DSM 348 / NBRC 103217 / DC2201).